The chain runs to 448 residues: Putative RNA-ligase (448 aa).

The protein belongs to the asfivirus M448R family.

The protein resides in the virion. This Ornithodoros (relapsing fever ticks) protein is Putative RNA-ligase.